The following is a 1364-amino-acid chain: DNA-directed RNA polymerase subunit beta' (1364 aa).

Residues 1–42 are disordered; it reads MTSSSSKSNKSRKSSKAAKDTTPVHESASRPLSKTPPPFRNH. Cysteine 250, cysteine 317, cysteine 324, and cysteine 327 together coordinate Zn(2+).

This sequence belongs to the RNA polymerase beta' chain family. RpoC2 subfamily. In terms of assembly, in cyanobacteria the RNAP catalytic core is composed of 2 alpha, 1 beta, 1 beta', 1 gamma and 1 omega subunit. When a sigma factor is associated with the core the holoenzyme is formed, which can initiate transcription. The cofactor is Zn(2+).

It carries out the reaction RNA(n) + a ribonucleoside 5'-triphosphate = RNA(n+1) + diphosphate. DNA-dependent RNA polymerase catalyzes the transcription of DNA into RNA using the four ribonucleoside triphosphates as substrates. The protein is DNA-directed RNA polymerase subunit beta' of Parasynechococcus marenigrum (strain WH8102).